A 417-amino-acid polypeptide reads, in one-letter code: MGEYTLVCPCSGKTVPDHYTLNCDCGSLIRTEYAARQLTLRNLPGMWKFYDWLPASGHTDTPGTTVTYRSEGLAKELGIDLHVAFNGYWPELGADMKTCSFKELEAPPTIVRAKEHGGKAMVLASAGNTARAFSYLSTITGFPLIVVVPKQNIDRLWIPGREPGASVKLISVGGGCDYTDAINLSNRIAALPGMMPEGGAKNVARRDGMGTVMLDAAVTMKGMPDDYFQAIGSGTGGIAAWEASMRLRADGRFGSKLPRLHLAQNLPFVPMLNAWKEGRREIIPERDMPDAKKSIAEMYSDVLSNRTPPYGVGGGVFDAMKATDGLMYGITREEAVAAKKLFEAREGIDILPPAAVAVAALVQASEKGLLEGRKVVLNVTGGGQERLMKEVPIYQVEPVLEVPGPDVPMEEILKVIA.

Lys102 bears the N6-(pyridoxal phosphate)lysine mark. Residues Asn128 and Thr380 each contribute to the pyridoxal 5'-phosphate site.

The protein belongs to the threonine synthase family. Cysteate synthase subfamily. As to quaternary structure, homotrimer. Pyridoxal 5'-phosphate serves as cofactor.

The enzyme catalyses O-phospho-L-serine + sulfite + H(+) = L-cysteate + phosphate. The protein operates within cofactor biosynthesis; coenzyme M biosynthesis. Its function is as follows. Specifically catalyzes the beta-elimination of phosphate from L-phosphoserine and the beta-addition of sulfite to the dehydroalanine intermediate to produce L-cysteate. This Methanocella arvoryzae (strain DSM 22066 / NBRC 105507 / MRE50) protein is Cysteate synthase.